The following is a 180-amino-acid chain: Protein SPMIP9 (180 aa).

As to quaternary structure, microtubule inner protein component of sperm flagellar doublet microtubules. Only detected after the mouse is 35 days old. Expression increases gradually from day 35 to 6 months, and remains stable after 54 days. Exclusively expressed in the epididymis and testis.

It localises to the nucleus. The protein localises to the cytoplasm. Its subcellular location is the cytoskeleton. The protein resides in the flagellum axoneme. In terms of biological role, microtubule inner protein (MIP) part of the dynein-decorated doublet microtubules (DMTs) in flagella axoneme. This Mus musculus (Mouse) protein is Protein SPMIP9 (Spmip9).